A 315-amino-acid chain; its full sequence is Calcium homeostasis modulator protein 6 (315 aa).

Residues 1–21 are Cytoplasmic-facing; that stretch reads MEKFKAVLDLQIKHRSALGYG. A helical transmembrane segment spans residues 22-37; the sequence is LVTLLTAGGEKIFSTV. At 38 to 46 the chain is on the extracellular side; that stretch reads VFQCPCTAT. Intrachain disulfides connect cysteine 41/cysteine 127, cysteine 43/cysteine 156, and cysteine 140/cysteine 147. The chain crosses the membrane as a helical span at residues 47–68; that stretch reads LNLTYGLVFLLVPALALFLLGY. The Cytoplasmic portion of the chain corresponds to 69 to 103; sequence ALSARTWRLLTGCCSRSASTRSSSGLRSTLVCAQV. Residues 104–128 traverse the membrane as a helical segment; the sequence is SAVAALAPLTWVAVALLGGSFYQCA. The Extracellular portion of the chain corresponds to 129–169; sequence VSGSTRLASYLCKDRNHSCIAKLPQVPCNKQEAEMQEILSQ. Residues 170 to 192 traverse the membrane as a helical segment; that stretch reads LKAQSQVLGWVLIAAVIFLLLVF. The Cytoplasmic portion of the chain corresponds to 193–315; sequence KCVSRCFSPV…DAAMANTHGV (123 aa).

The protein belongs to the CALHM family. Oligomerizes to form decameric and undecameric channels.

The protein resides in the cell membrane. It carries out the reaction ATP(in) = ATP(out). In terms of biological role, pore-forming subunit of an ATP-permeable channel. In response to pathogen-derived and proinflammatory stimuli, relocates from intracellular compartments to NK-dendritic cell and NK-macrophage immune synapses where it mediates ATP efflux and NK cell activation involved in antimicrobial and antitumor responses. May assemble to form gap junction channel-like structures with gating and ion conductance likely regulated by membrane lipids and voltage rather than by extracellular calcium levels. The polypeptide is Calcium homeostasis modulator protein 6 (Rattus norvegicus (Rat)).